Consider the following 792-residue polypeptide: Probable exo-1,4-beta-xylosidase xlnD (792 aa).

The N-terminal stretch at Met1–Ala20 is a signal peptide. N-linked (GlcNAc...) asparagine glycans are attached at residues Asn23, Asn87, Asn142, and Asn246. The active site involves Asp310. Residues Asn326, Asn385, Asn391, Asn404, Asn438, Asn475, Asn479, Asn516, Asn677, and Asn699 are each glycosylated (N-linked (GlcNAc...) asparagine).

It belongs to the glycosyl hydrolase 3 family.

It is found in the secreted. The enzyme catalyses Hydrolysis of (1-&gt;4)-beta-D-xylans, to remove successive D-xylose residues from the non-reducing termini.. It functions in the pathway glycan degradation; xylan degradation. Its function is as follows. Xylan 1,4-beta-xylosidase involved in the hydrolysis of xylan, a major structural heterogeneous polysaccharide found in plant biomass representing the second most abundant polysaccharide in the biosphere, after cellulose. This is Probable exo-1,4-beta-xylosidase xlnD (xlnD) from Aspergillus clavatus (strain ATCC 1007 / CBS 513.65 / DSM 816 / NCTC 3887 / NRRL 1 / QM 1276 / 107).